Reading from the N-terminus, the 263-residue chain is Small ribosomal subunit protein eS4 (263 aa).

The S4 RNA-binding domain occupies 42–104; it reads LPLIVFLRNR…TGEHFRLVYD (63 aa).

It belongs to the eukaryotic ribosomal protein eS4 family.

The protein is Small ribosomal subunit protein eS4 (RPS4Y1) of Gorilla gorilla gorilla (Western lowland gorilla).